Here is a 365-residue protein sequence, read N- to C-terminus: DNA replication and repair protein RecF (365 aa).

30-37 provides a ligand contact to ATP; sequence GRNAQGKT.

It belongs to the RecF family.

It localises to the cytoplasm. In terms of biological role, the RecF protein is involved in DNA metabolism; it is required for DNA replication and normal SOS inducibility. RecF binds preferentially to single-stranded, linear DNA. It also seems to bind ATP. In Streptococcus pneumoniae (strain 70585), this protein is DNA replication and repair protein RecF.